The sequence spans 291 residues: MKTKIKKITKKFNLKKDTEVKPLSTQELIEEQKEFSQAVDKLMTKKQKPTFEDIGSSIVDFETSDNDKFYESVRDAIEKTSEIVDDLDQSELTKNSYEQKELSAKAIIQAALYVAGRNGMTLQELNKILPKIHQDQLFKELEEMIYSYDQNLNFGLTIKNYGGRYKILTKAAVKKDMQRYVSERFKNPLNKSLMEVLAIVAYNQPCTRVRINEIRGVDSLSLVDNLLEKGLIVEVGRADTPGRPFLYNVSEKFFDLFGIESIDDLPQIKHFDPDSYQEGDFFDSNRYDENE.

It belongs to the ScpB family. As to quaternary structure, homodimer. Homodimerization may be required to stabilize the binding of ScpA to the Smc head domains. Component of a cohesin-like complex composed of ScpA, ScpB and the Smc homodimer, in which ScpA and ScpB bind to the head domain of Smc. The presence of the three proteins is required for the association of the complex with DNA.

It localises to the cytoplasm. Functionally, participates in chromosomal partition during cell division. May act via the formation of a condensin-like complex containing Smc and ScpA that pull DNA away from mid-cell into both cell halves. The chain is Segregation and condensation protein B from Mycoplasmoides gallisepticum (strain R(low / passage 15 / clone 2)) (Mycoplasma gallisepticum).